A 92-amino-acid chain; its full sequence is Small ribosomal subunit protein uS19 (92 aa).

Belongs to the universal ribosomal protein uS19 family.

Functionally, protein S19 forms a complex with S13 that binds strongly to the 16S ribosomal RNA. The polypeptide is Small ribosomal subunit protein uS19 (Gloeothece citriformis (strain PCC 7424) (Cyanothece sp. (strain PCC 7424))).